We begin with the raw amino-acid sequence, 150 residues long: MFEDPRERPRTLHELCESLNTTLQNLQVQCVYCKETLQWADVYNFAICDLRVVYRDRSPYAACKRCVIFYSKITEYRRYTCSVYGATLEALTKKSLCNLLIRCHRCQMPLGPEEKQRIVDEKRRFHEIAGQWKGLCTNCWRPRRQTETQV.

2 zinc fingers span residues 30–66 and 103–139; these read CVYC…CKRC and CHRC…CTNC. Residues 148 to 150 carry the PDZ-binding domain motif; it reads TQV.

It belongs to the papillomaviridae E6 protein family. Forms homodimers. Interacts with ubiquitin-protein ligase UBE3A/E6-AP and thus forms a complex with human TP53. Interacts with human NFX1 and MAGI3. Interacts with human IRF3; this interaction inhibits the establishment of antiviral state. Interacts with human TYK2; this interaction inhibits JAK-STAT activation by interferon alpha. Interacts with host DLG1; this interaction leads to the proteasomal degradation of DLG1.

The protein resides in the host cytoplasm. The protein localises to the host nucleus. In terms of biological role, plays a major role in the induction and maintenance of cellular transformation. Acts mainly as an oncoprotein by stimulating the destruction of many host cell key regulatory proteins. E6 associates with host UBE3A/E6-AP ubiquitin-protein ligase, and inactivates tumor suppressors TP53 and TP73 by targeting them to the 26S proteasome for degradation. In turn, DNA damage and chromosomal instabilities increase and lead to cell proliferation and cancer development. The complex E6/E6AP targets several other substrates to degradation via the proteasome including host DLG1 or NFX1, a repressor of human telomerase reverse transcriptase (hTERT). The resulting increased expression of hTERT prevents the shortening of telomere length leading to cell immortalization. Other cellular targets including BAK1, Fas-associated death domain-containing protein (FADD) and procaspase 8, are degraded by E6/E6AP causing inhibition of apoptosis. E6 also inhibits immune response by interacting with host IRF3 and TYK2. These interactions prevent IRF3 transcriptional activities and inhibit TYK2-mediated JAK-STAT activation by interferon alpha resulting in inhibition of the interferon signaling pathway. In Human papillomavirus type 26, this protein is Protein E6.